A 32-amino-acid polypeptide reads, in one-letter code: Periplasmic [NiFeSe] hydrogenase small subunit (32 aa).

Positions 18 and 21 each coordinate [4Fe-4S] cluster.

Belongs to the [NiFe]/[NiFeSe] hydrogenase small subunit family. As to quaternary structure, heterodimer of a large and a small subunit. Requires [3Fe-4S] cluster as cofactor. It depends on [4Fe-4S] cluster as a cofactor.

It localises to the periplasm. The enzyme catalyses H2 + A = AH2. The sequence is that of Periplasmic [NiFeSe] hydrogenase small subunit from Desulfomicrobium norvegicum (strain DSM 1741 / NCIMB 8310) (Desulfovibrio baculatus (strain Norway 4)).